The chain runs to 529 residues: Cytochrome P450 monooxygenase ausG (529 aa).

The chain crosses the membrane as a helical span at residues 31-51; the sequence is LLVVCGLPGLLLLFFVTAILL. Cysteine 470 contributes to the heme binding site.

Belongs to the cytochrome P450 family. The cofactor is heme.

The protein resides in the membrane. Its pathway is secondary metabolite biosynthesis; terpenoid biosynthesis. In terms of biological role, cytochrome P450 monooxygenase; part of the gene cluster that mediates the biosynthesis of calidodehydroaustin, a fungal meroterpenoid. The first step of the pathway is the synthesis of 3,5-dimethylorsellinic acid by the polyketide synthase ausA. 3,5-dimethylorsellinic acid is then prenylated by the polyprenyl transferase ausN. Further epoxidation by the FAD-dependent monooxygenase ausM and cyclization by the probable terpene cyclase ausL lead to the formation of protoaustinoid A. Protoaustinoid A is then oxidized to spiro-lactone preaustinoid A3 by the combined action of the FAD-binding monooxygenases ausB and ausC, and the dioxygenase ausE. Acid-catalyzed keto-rearrangement and ring contraction of the tetraketide portion of preaustinoid A3 by ausJ lead to the formation of preaustinoid A4. The aldo-keto reductase ausK, with the help of ausH, is involved in the next step by transforming preaustinoid A4 into isoaustinone which is in turn hydroxylated by the P450 monooxygenase ausI to form austinolide. The cytochrome P450 monooxygenase ausG modifies austinolide to austinol. Austinol is further acetylated to austin by the O-acetyltransferase ausP, which spontaneously changes to dehydroaustin. The cytochrome P450 monooxygenase ausR then converts dehydroaustin is into 7-dehydrodehydroaustin. The hydroxylation catalyzed by ausR permits the O-acetyltransferase ausQ to add an additional acetyl group to the molecule, leading to the formation of acetoxydehydroaustin. The short chain dehydrogenase ausT catalyzes the reduction of the double bond present between carbon atoms 1 and 2 to convert 7-dehydrodehydroaustin into 1,2-dihydro-7-hydroxydehydroaustin. AusQ catalyzes not only an acetylation reaction but also the addition of the PKS ausV diketide product to 1,2-dihydro-7-hydroxydehydroaustin, forming precalidodehydroaustin. Finally, the iron/alpha-ketoglutarate-dependent dioxygenase converts precalidodehydroaustin into calidodehydroaustin. The polypeptide is Cytochrome P450 monooxygenase ausG (Aspergillus calidoustus).